The chain runs to 394 residues: MSKEKFERTKPHVNVGTIGHVDHGKTTLTAAITTVLAKTYGGSARAFDQIDNAPEEKARGITINTSHVEYDTPARHYAHVDCPGHADYVKNMITGAAQMDGAILVVAATDGPMPQTREHILLGRQVGVPFMIVFMNKCDMVDDEELLELVEMEVRELLSQYDFPGDDIPVIRGSALKALEGEAEWEAKIIELAGYLDSYIPEPERAIDKPFLLPIEDVFSISGRGTVVTGRVERGIVKVGEEVEIVGIKDTVKSTCTGVEMFRKLLDEGRAGENVGVLLRGIKREEIERGQVLAKPGSIKPHTQFESEVYILSKDEGGRHTPFFKGYRPQFYFRTTDVTGTIELPEGVEMVMPGDNIKMVVTLIHPIAMDDGLRFAIREGGRTVGAGVVAKVIA.

A tr-type G domain is found at 10–204 (KPHVNVGTIG…YLDSYIPEPE (195 aa)). The G1 stretch occupies residues 19 to 26 (GHVDHGKT). 19 to 26 (GHVDHGKT) contacts GTP. Mg(2+) is bound at residue T26. A G2 region spans residues 60–64 (GITIN). Positions 81 to 84 (DCPG) are G3. Residues 81–85 (DCPGH) and 136–139 (NKCD) contribute to the GTP site. The G4 stretch occupies residues 136-139 (NKCD). The tract at residues 174–176 (SAL) is G5.

The protein belongs to the TRAFAC class translation factor GTPase superfamily. Classic translation factor GTPase family. EF-Tu/EF-1A subfamily. Monomer.

It localises to the cytoplasm. It catalyses the reaction GTP + H2O = GDP + phosphate + H(+). In terms of biological role, GTP hydrolase that promotes the GTP-dependent binding of aminoacyl-tRNA to the A-site of ribosomes during protein biosynthesis. The chain is Elongation factor Tu from Pectobacterium atrosepticum (strain SCRI 1043 / ATCC BAA-672) (Erwinia carotovora subsp. atroseptica).